A 435-amino-acid polypeptide reads, in one-letter code: Cytokine-dependent hematopoietic cell linker (435 aa).

Y69 and Y96 each carry phosphotyrosine; by LYN. Residues 155 to 303 (KINKTPLPPP…PDPTKPDEKD (149 aa)) form a disordered region. The interval 160–165 (PLPPPR) is mediates interaction with PLCG1; essential for BCR signaling; involved in restoration of BCR-induced calcium response and ERK2 and JNK2 activation in BLNK-deficient cells expressing LAT. Positions 178–182 (PPAPP) are mediates interaction with LAT, GRB2, and FGR; involved in translocation to the glycolipid-enriched microdomain and restoration of BCR-induced calcium response in BLNK-deficient DT40 cells expressing LAT. Residues 226–249 (PESSCPSSNQNTQKSPPAIASSSY) are compositionally biased toward polar residues. Residues 290–303 (NSEKPDPTKPDEKD) are compositionally biased toward basic and acidic residues. The 110-residue stretch at 309 to 418 (WYIGEYSRQA…RKQCYLTQPL (110 aa)) folds into the SH2 domain.

When phosphorylated, interacts with PLCG1, PLCG2, GRB2, VAV and LAT. Associated with a tyrosine-phosphorylated polypeptide (p92) in response to immunoreceptor stimulation. Interacts with LBR and AGO2. Interacts with FGR. Part of a complex consisting of CLNK, SKAP1 and FYB1. Interacts (via SH2 domain) with FYB1; this interaction allows SKAP1 and FYB1 to promote tyrosine phosphorylation of CLNK by LYN. Interacts (via SH2 domain) with MAP4K1. Tyrosine-phosphorylated upon BCR cross-linking. Tyrosine phosphorylation at both Tyr-69 and Tyr-96 are required for BCR-induced calcium response and are essential to restore PLCG2-mediated signaling in BLNK-deficient DT40 cells, but this phosphorylation is dispensable in cells expressing LAT. Interacts with the SH2 domain of PLCG1 via phosphorylated Tyr-96. Tyrosine phosphorylation is increased when complexed with SKAP1 and FYB1. Expressed in T-cells, mast cells, natural killer and natural killer T cells (at protein level). Expressed in cytokine-stimulated hemopoietic cells.

Its subcellular location is the cytoplasm. In terms of biological role, an adapter protein which plays a role in the regulation of immunoreceptor signaling, including PLC-gamma-mediated B-cell antigen receptor (BCR) signaling and FC-epsilon R1-mediated mast cell degranulation. Together with FGR, it acts as a negative regulator of natural killer cell-activating receptors and inhibits interferon-gamma production. Acts as a positive regulator of both T-cell receptor and natural killer T (NKT) cell receptor signaling in CD4-positive NKT cells. Together with MAP4K1, it enhances CD3-triggered activation of T-cells and subsequent IL2 production. May be involved in tumor necrosis factor induced cell death by promoting reactive oxidative species generation, and MLKL oligomerization, ultimately leading to necrosis. Involved in phosphorylation of LAT. May be involved in high affinity immunoglobulin epsilon receptor signaling in mast cells. The chain is Cytokine-dependent hematopoietic cell linker (Clnk) from Mus musculus (Mouse).